A 1042-amino-acid chain; its full sequence is Starch synthase 3, chloroplastic/amyloplastic (1042 aa).

A chloroplast-targeting transit peptide spans 1–44; that stretch reads MISYFLNQDFSRKKQGRMAASGPKSSGPRGFGRRTTVGSAQKRT. The interval 1–63 is disordered; sequence MISYFLNQDF…NATSTATNEV (63 aa). Residues 54-63 are compositionally biased toward polar residues; that stretch reads NATSTATNEV. The stretch at 247–302 forms a coiled coil; that stretch reads ENFLLEEKLREQEKLAKEEAERERQKEEKRRIEAQKAAIEADRAQAKAETQKRREL. Lysine 608 serves as a coordination point for ADP-alpha-D-glucose.

Belongs to the glycosyltransferase 1 family. Bacterial/plant glycogen synthase subfamily. As to expression, expressed in leaves and flowers.

The protein localises to the plastid. Its subcellular location is the chloroplast. It is found in the amyloplast. The catalysed reaction is [(1-&gt;4)-alpha-D-glucosyl](n) + ADP-alpha-D-glucose = [(1-&gt;4)-alpha-D-glucosyl](n+1) + ADP + H(+). The protein operates within glycan biosynthesis; starch biosynthesis. Its function is as follows. Involved in the synthesis of glycan chains within amylopectin in leaves. May play a regulatory role in the control of starch accumulation in plastids. The chain is Starch synthase 3, chloroplastic/amyloplastic (SS3) from Arabidopsis thaliana (Mouse-ear cress).